The primary structure comprises 921 residues: Isoleucine--tRNA ligase (921 aa).

The short motif at 57–67 is the 'HIGH' region element; it reads PYANGNIHVGT. Residue glutamate 551 participates in L-isoleucyl-5'-AMP binding. The 'KMSKS' region motif lies at 592–596; sequence KMSKS. Lysine 595 is a binding site for ATP. The Zn(2+) site is built by cysteine 885, cysteine 888, cysteine 905, and cysteine 908.

It belongs to the class-I aminoacyl-tRNA synthetase family. IleS type 1 subfamily. In terms of assembly, monomer. Requires Zn(2+) as cofactor.

The protein resides in the cytoplasm. The catalysed reaction is tRNA(Ile) + L-isoleucine + ATP = L-isoleucyl-tRNA(Ile) + AMP + diphosphate. Functionally, catalyzes the attachment of isoleucine to tRNA(Ile). As IleRS can inadvertently accommodate and process structurally similar amino acids such as valine, to avoid such errors it has two additional distinct tRNA(Ile)-dependent editing activities. One activity is designated as 'pretransfer' editing and involves the hydrolysis of activated Val-AMP. The other activity is designated 'posttransfer' editing and involves deacylation of mischarged Val-tRNA(Ile). The sequence is that of Isoleucine--tRNA ligase from Kosmotoga olearia (strain ATCC BAA-1733 / DSM 21960 / TBF 19.5.1).